Here is a 574-residue protein sequence, read N- to C-terminus: Arginine--tRNA ligase (574 aa).

The 'HIGH' region signature appears at 126 to 136 (PNIAKRMHVGH).

This sequence belongs to the class-I aminoacyl-tRNA synthetase family. In terms of assembly, monomer.

The protein resides in the cytoplasm. It carries out the reaction tRNA(Arg) + L-arginine + ATP = L-arginyl-tRNA(Arg) + AMP + diphosphate. This Chloroflexus aurantiacus (strain ATCC 29366 / DSM 635 / J-10-fl) protein is Arginine--tRNA ligase.